A 192-amino-acid chain; its full sequence is SRP-independent targeting protein 2 homolog (192 aa).

The next 2 helical transmembrane spans lie at 16 to 36 (ILTFMLAADLIVNVLFWILRF) and 102 to 122 (WILIFLAALTSVKVFAFYLLV). Residues 149 to 192 (LNQPPQQQQQQQQQQHQQHATPSEPVLSKRQQKLRKKAAKYSRP) are disordered. The span at 151 to 167 (QPPQQQQQQQQQQHQQH) shows a compositional bias: low complexity. Residues 178–192 (RQQKLRKKAAKYSRP) are compositionally biased toward basic residues.

The protein belongs to the TMEM208 family.

The protein localises to the endoplasmic reticulum membrane. Its function is as follows. May function in a SRP (signal recognition particle) and GET (guided entry of tail-anchored proteins) independent pathway for targeting a broad range of substrate proteins to the endoplasmic reticulum. Has a role in meiosis. The chain is SRP-independent targeting protein 2 homolog from Schizosaccharomyces pombe (strain 972 / ATCC 24843) (Fission yeast).